Here is a 254-residue protein sequence, read N- to C-terminus: Bidirectional sugar transporter SWEET6b (254 aa).

The Extracellular portion of the chain corresponds to 1–9; the sequence is MISPDAARN. Residues 10–30 traverse the membrane as a helical segment; it reads VVGIIGNVISFGLFLAPVPTF. One can recognise a MtN3/slv 1 domain in the interval 10-98; the sequence is VVGIIGNVIS…IFFLYSPNKK (89 aa). The Cytoplasmic portion of the chain corresponds to 31–45; the sequence is WRICKRKDVEEFKAD. A helical membrane pass occupies residues 46 to 66; the sequence is PYLATLLNCMLWVFYGIPIVH. At 67–69 the chain is on the extracellular side; the sequence is PNS. A helical membrane pass occupies residues 70–90; that stretch reads ILVVTINGIGLVVEGTYLFIF. The Cytoplasmic segment spans residues 91–101; it reads FLYSPNKKRLR. Residues 102-122 form a helical membrane-spanning segment; the sequence is MLAVLGVELVFMLAVILGVLL. The Extracellular portion of the chain corresponds to 123-131; sequence GAHTHKKRS. The helical transmembrane segment at 132–152 threads the bilayer; the sequence is MIVGILCVFFGSIMYFSPLTI. Residues 133 to 216 form the MtN3/slv 2 domain; the sequence is IVGILCVFFG…LILYACYYRT (84 aa). Topologically, residues 153-165 are cytoplasmic; it reads MGKVIKTKSVEYM. The chain crosses the membrane as a helical span at residues 166–186; the sequence is PFFLSLVCFLNGVCWTAYALI. Residues 187 to 189 lie on the Extracellular side of the membrane; that stretch reads RFD. Residues 190-210 form a helical membrane-spanning segment; that stretch reads IYVTIPNSLGAIFGAIQLILY. Topologically, residues 211–254 are cytoplasmic; the sequence is ACYYRTTPKKTKAAKDVEMPSVISGPGAAATASGGSVVSVTVER.

This sequence belongs to the SWEET sugar transporter family. As to quaternary structure, forms homooligomers and/or heterooligomers.

The protein localises to the cell membrane. In terms of biological role, mediates both low-affinity uptake and efflux of sugar across the plasma membrane. The polypeptide is Bidirectional sugar transporter SWEET6b (SWEET6B) (Oryza sativa subsp. indica (Rice)).